The primary structure comprises 570 residues: MVLQQQTHFLTKKIDQEDEEEEPSHDFIFRSKLPDIFIPNHLPLTDYVFQRFSGDGDGDSSTTCIIDGATGRILTYADVQTNMRRIAAGIHRLGIRHGDVVMLLLPNSPEFALSFLAVAYLGAVSTTANPFYTQPEIAKQAKASAAKMIITKKCLVDKLTNLKNDGVLIVCLDDDGDNGVVSSSDDGCVSFTELTQADETELLKPKISPEDTVAMPYSSGTTGLPKGVMITHKGLVTSIAQKVDGENPNLNFTANDVILCFLPMFHIYALDALMLSAMRTGAALLIVPRFELNLVMELIQRYKVTVVPVAPPVVLAFIKSPETERYDLSSVRIMLSGAATLKKELEDAVRLKFPNAIFGQGYGMTESGTVAKSLAFAKNPFKTKSGACGTVIRNAEMKVVDTETGISLPRNKSGEICVRGHQLMKGYLNDPEATARTIDKDGWLHTGDIGFVDDDDEIFIVDRLKELIKFKGYQVAPAELEALLISHPSIDDAAVVAMKDEVADEVPVAFVARSQGSQLTEDDVKSYVNKQVVHYKRIKMVFFIEVIPKAVSGKILRKDLRAKLETMCSK.

6 residues coordinate ATP: Ser-218, Ser-219, Gly-220, Thr-221, Thr-222, and Lys-226. (E)-4-coumaroyl-AMP is bound at residue Tyr-268. Residue Arg-289 coordinates CoA. The SBD1 stretch occupies residues 291 to 360 (ELNLVMELIQ…LKFPNAIFGQ (70 aa)). Residues Ala-338, Gln-360, Gly-361, and Thr-365 each contribute to the (E)-4-coumaroyl-AMP site. Residues Gln-360, Gly-361, Thr-365, Asp-448, and Arg-463 each contribute to the ATP site. Residues 361–427 (GYGMTESGTV…VRGHQLMKGY (67 aa)) are SBD2. Residues Lys-465 and Lys-469 each contribute to the (E)-4-coumaroyl-AMP site. CoA contacts are provided by Lys-471 and Gly-472. ATP is bound at residue Lys-554.

Belongs to the ATP-dependent AMP-binding enzyme family. Mg(2+) serves as cofactor.

The enzyme catalyses (E)-sinapate + ATP + CoA = (E)-sinapoyl-CoA + AMP + diphosphate. It carries out the reaction (E)-4-coumarate + ATP + CoA = (E)-4-coumaroyl-CoA + AMP + diphosphate. The catalysed reaction is (E)-caffeate + ATP + CoA = (E)-caffeoyl-CoA + AMP + diphosphate. It catalyses the reaction (E)-ferulate + ATP + CoA = (E)-feruloyl-CoA + AMP + diphosphate. The enzyme catalyses (E)-sinapate + ATP + H(+) = (E)-sinapoyl-AMP + diphosphate. It carries out the reaction (E)-sinapoyl-AMP + CoA = (E)-sinapoyl-CoA + AMP + H(+). The catalysed reaction is (E)-4-coumarate + ATP + H(+) = (E)-4-coumaroyl-AMP + diphosphate. It catalyses the reaction (E)-4-coumaroyl-AMP + CoA = (E)-4-coumaroyl-CoA + AMP + H(+). The enzyme catalyses (E)-caffeate + ATP + H(+) = (E)-caffeoyl-AMP + diphosphate. It carries out the reaction (E)-caffeoyl-AMP + CoA = (E)-caffeoyl-CoA + AMP + H(+). The catalysed reaction is (E)-ferulate + ATP + H(+) = (E)-feruloyl-AMP + diphosphate. It catalyses the reaction (E)-feruloyl-AMP + CoA = (E)-feruloyl-CoA + AMP + H(+). It functions in the pathway phytoalexin biosynthesis; 3,4',5-trihydroxystilbene biosynthesis; 3,4',5-trihydroxystilbene from trans-4-coumarate: step 1/2. Produces CoA thioesters of a variety of hydroxy- and methoxy-substituted cinnamic acids, which are used to synthesize several phenylpropanoid-derived compounds, including anthocyanins, flavonoids, isoflavonoids, coumarins, lignin, suberin and wall-bound phenolics. Follows a two-step reaction mechanism, wherein the carboxylate substrate first undergoes adenylation by ATP, followed by a thioesterification in the presence of CoA to yield the final CoA thioesters. The sequence is that of 4-coumarate--CoA ligase 4 from Arabidopsis thaliana (Mouse-ear cress).